A 185-amino-acid polypeptide reads, in one-letter code: Uroplakin-2 (185 aa).

The signal sequence occupies residues 1–26 (MASPWPVWTLSWILILLAVLVPGAAA). Residues 27–85 (DFNISSLSGLLSPVMTESLLVALPPCHLTGGNATLTVRRANDSKVVRSSFVVPPCRGRR) constitute a propeptide that is removed on maturation. Asparagine 29, asparagine 58, and asparagine 67 each carry an N-linked (GlcNAc...) asparagine glycan. The Lumenal segment spans residues 86 to 156 (ELVSVVDSGS…IGLAMARTGG (71 aa)). Residues 157 to 177 (MVVITVLLSVAMFLLVLGLII) form a helical membrane-spanning segment. Over 178 to 185 (ALALGARK) the chain is Cytoplasmic.

The protein belongs to the uroplakin-2 family. In terms of assembly, interacts with uroplakin-1a (UPK1A). As to expression, bladder epithelium.

It is found in the cell membrane. Functionally, component of the asymmetric unit membrane (AUM); a highly specialized biomembrane elaborated by terminally differentiated urothelial cells. May play an important role in regulating the assembly of the AUM. The protein is Uroplakin-2 (UPK2) of Bos taurus (Bovine).